The primary structure comprises 240 residues: Thyroid transcription factor 1-associated protein 26 (240 aa).

The tract at residues 104–181 (LRKQQRKAGL…QEEYERVQAK (78 aa)) is disordered. A compositionally biased stretch (low complexity) spans 131–149 (TEQTSSEEPPGGHQPQPEE). The segment covering 171–181 (AQEEYERVQAK) has biased composition (basic and acidic residues).

Belongs to the TAP26 family. Interacts with NKX2-1.

The protein localises to the nucleus. Functionally, component of the transcription complexes of the pulmonary surfactant-associated protein-B (SFTPB) and -C (SFTPC). Enhances homeobox protein Nkx-2.1-activated SFTPB and SFTPC promoter activities. In Mus musculus (Mouse), this protein is Thyroid transcription factor 1-associated protein 26 (Ccdc59).